The primary structure comprises 597 residues: FERM domain-containing protein 3 (597 aa).

An FERM domain is found at 32–312 (MRCTIRLLDD…ENQAFYKYAK (281 aa)). The segment at 383-403 (LLPSPSEQEEELPLGEGVPLP) is disordered. The chain crosses the membrane as a helical span at residues 531–551 (LLVVGLGLLLFVFPLLLLLLE).

Ovary-specific.

The protein resides in the membrane. Its function is as follows. Putative tumor suppressor gene that may be implicated in the origin and progression of lung cancer. The sequence is that of FERM domain-containing protein 3 (FRMD3) from Homo sapiens (Human).